A 320-amino-acid polypeptide reads, in one-letter code: MGLAGPRKRTKISHDPNNTAWSRSTSGYGHKIMSAQGWTPGSFLGASNAAHADHFTAGSAGHIRVILKDDNLGLGAKLRAEDEPTGLDAFQGLLGRLNGKSDEELEKELKKRHDRQLANFVEKRWKTMQFVSGGLLVHEKIQALADVKSAGGEEVQTPQISHDELKSEKRPKKARKKEKRRARGDDTGLDLAEQSPKRKRKDRKENKEKKKSSDDSSYANQGTPSEDALVDKIQKKRKKRKQKDPEPSNTEVHDDSLPPDTRSVSQEEQESRYSAKNESIRKIREHRPMGRQFTRGRHIQQKKLALMDSKSISEIFMVKC.

The span at 1–11 shows a compositional bias: basic residues; that stretch reads MGLAGPRKRTK. The interval 1 to 24 is disordered; the sequence is MGLAGPRKRTKISHDPNNTAWSRS. Polar residues predominate over residues 15–24; the sequence is DPNNTAWSRS. A G-patch domain is found at 25–79; that stretch reads TSGYGHKIMSAQGWTPGSFLGASNAAHADHFTAGSAGHIRVILKDDNLGLGAKLR. The tract at residues 152 to 298 is disordered; that stretch reads GEEVQTPQIS…MGRQFTRGRH (147 aa). Basic residues predominate over residues 169–182; sequence KRPKKARKKEKRRA. 3 stretches are compositionally biased toward basic and acidic residues: residues 203–214, 243–256, and 269–288; these read RKENKEKKKSSD, KDPEPSNTEVHDDS, and QESRYSAKNESIRKIREHRP.

It belongs to the PINX1 family.

The protein resides in the nucleus. It localises to the nucleolus. Functionally, involved in rRNA-processing at A0, A1 and A2 sites and negatively regulates telomerase. In Ajellomyces capsulatus (strain NAm1 / WU24) (Darling's disease fungus), this protein is Protein PXR1 (PXR1).